Here is a 110-residue protein sequence, read N- to C-terminus: uncharacterized protein (110 aa).

Disordered regions lie at residues 1-41 and 65-110; these read MEWG…ERAQ and LRQL…ASES. Residues 38-68 adopt a coiled-coil conformation; sequence ERAQQLLDAVEQRQRQLLDTIAACEEMLRQL.

This is an uncharacterized protein from Mus musculus (Mouse).